Reading from the N-terminus, the 453-residue chain is MGRTREAGCVAAGVVIGAGACYCVYRLAWGRDENEKIWDEDEESTDTSEIGVETVKGAKTSVGAGSGVKLQGDSKVKPEVNLGLEDCPGVKEKAHSGSHRGGGLEAKAKALFNTLKEQASAKAGKGARMGTITGNRTLAPSLPCPGGRGGGCHPTRSGSRAGGRASGKSKGKARSKSTRAPATTWPVRRGKFNFPYKIDDILSAPDLQKVLNILERTNDPFIQEVALVTLGNNAAYSFNQNAIRELGGVPIIAKLIKTKDPIIREKTYNALNNLSVNAENQGKIKTYISQVCDDTMVCRLDSAVQMAGLRLLTNMTVTNHYQHLLSYSFPDFFALLFLGNHFTKIQIMKLIINFTENPAMTRELVSCKVPSELISLFNKEWDREILLNILTLFENINDNIKNEGLASSRKEFSRSSLFFLFKESGVCVKKIKALANHNDLVVKVKVLKVLTKL.

The Mitochondrial intermembrane segment spans residues 1–6 (MGRTRE). Mitochondrion outer membrane (MOM)-targeting sequence regions lie at residues 1 to 6 (MGRTRE) and 26 to 36 (RLAWGRDENEK). Residues 7–29 (AGCVAAGVVIGAGACYCVYRLAW) traverse the membrane as a helical; Signal-anchor segment. The Cytoplasmic portion of the chain corresponds to 30 to 453 (GRDENEKIWD…VKVLKVLTKL (424 aa)). The tract at residues 140–182 (PSLPCPGGRGGGCHPTRSGSRAGGRASGKSKGKARSKSTRAPA) is disordered. Basic residues predominate over residues 167–177 (GKSKGKARSKS). 4 ARM repeats span residues 195–235 (PYKI…NNAA), 237–276 (SFNQ…NLSV), 358–398 (PAMT…NIND), and 415–453 (SSLF…LTKL).

This sequence belongs to the eutherian X-chromosome-specific Armcx family. In terms of assembly, interacts with MIRO1.

It is found in the mitochondrion. Its subcellular location is the mitochondrion outer membrane. Its function is as follows. Regulates mitochondrial transport during axon regeneration. Increases the proportion of motile mitochondria by recruiting stationary mitochondria into the motile pool. Enhances mitochondria movement and neurite growth in both adult axons and embryonic neurons. Promotes neuronal survival and axon regeneration after nerve injury. May link mitochondria to the Trak1-kinesin motor complex via its interaction with MIRO1. In Pongo abelii (Sumatran orangutan), this protein is Armadillo repeat-containing X-linked protein 1 (ARMCX1).